A 159-amino-acid chain; its full sequence is Oleosin Cor a 12 (159 aa).

Positions 1 to 10 (MADRPQQLQV) are enriched in polar residues. The interval 1-24 (MADRPQQLQVHPQRGHGHYEGGIK) is disordered. Transmembrane regions (helical) follow at residues 45–65 (VGGT…IGLL), 70–90 (LFII…LAVA), and 92–112 (FLSS…VLNY).

This sequence belongs to the oleosin family. As to expression, expressed in seeds.

The protein localises to the lipid droplet. It localises to the membrane. Its function is as follows. May have a structural role to stabilize the lipid body during desiccation of the seed by preventing coalescence of the oil. Probably interacts with both lipid and phospholipid moieties of lipid bodies. May also provide recognition signals for specific lipase anchorage in lipolysis during seedling growth. In Corylus avellana (European hazel), this protein is Oleosin Cor a 12.